A 132-amino-acid chain; its full sequence is N,N-dimethylformamidase alpha subunit (132 aa).

As to quaternary structure, heterotetramer of two DmfA1 (alpha) and two DmfA2 (beta) subunits.

The catalysed reaction is N,N-dimethylformamide + H2O = dimethylamine + formate. Its activity is regulated as follows. Activity is slightly inhibited by Mg(2+) and Mn(2+), and slightly increased by Cu(2+). Activity is slightly inhibited by the chelating agents 8-hydroxyquinoline, ethylenediaminetetraacetate, o-phenanthroline and 2,2'-bipyridyl. Its function is as follows. Hydrolyzes N,N-dimethylformamide, and to a lesser extent N,N-dimethylacetamide and N,N-diethylacetamide. Has no activity against the substituted amides N-methylformamide, N-ethylformamide, N-ethylformamide and N-methylacetamide or the unsubstituted amides formamide, nicotinamide, acetoamide, benzamide, acetamide and acrylamide. The sequence is that of N,N-dimethylformamidase alpha subunit from Alcaligenes sp.